Here is a 1021-residue protein sequence, read N- to C-terminus: Ribosome quality control complex subunit 2 (1021 aa).

Residues 348–388 (IEAQKLKKRAHDRLATAERRLESAKEDQARKLQSLQDAQAT) adopt a coiled-coil conformation. Residues 457 to 484 (NPESVDNSDESSETSDDDLDDSDDDNKV) are disordered. The span at 462–480 (DNSDESSETSDDDLDDSDD) shows a compositional bias: acidic residues. Ser478 is modified (phosphoserine). Coiled-coil stretches lie at residues 507 to 546 (NARK…DLKR) and 698 to 727 (DEKS…LKME). Composition is skewed to polar residues over residues 746-761 (YNED…TTGS) and 839-856 (ISSQ…TPTA). 2 disordered regions span residues 746–801 (YNED…TALE) and 832–905 (HAAR…VESF). The segment covering 876–905 (DQSRNSEAENEKGLSTEQRDEKKHAKVESF) has biased composition (basic and acidic residues).

It belongs to the NEMF family. As to quaternary structure, component of the ribosome quality control complex (RQC), composed of the E3 ubiquitin ligase rkr1/ltn1, rqc1 and mtr1/rqc2, as well as cdc48 and its ubiquitin-binding cofactors associated with the 60S ribosomal subunit. RQC2 binds to the 40S-binding surface of tRNAs.

The protein resides in the cytoplasm. Key component of the ribosome quality control complex (RQC), a ribosome-associated complex that mediates the extraction of incompletely synthesized nascent chains from stalled ribosomes as well as their ubiquitin-mediated proteasomal degradation. Thereby, frees 60S subunit ribosomes from the stalled translation complex and prevents the accumulation of nascent polypeptide chains that are potentially toxic for the cell. Within the RQC complex, mtr1/rqc2 specifically binds stalled 60S ribosomal subunits by recognizing an exposed, nascent chain-conjugated tRNA moiety and promotes the recruitment of rkr1/ltn1 to stalled 60S subunits. Following binding to stalled 60S ribosomal subunits, mtr1/rqc2 mediates CAT tailing by recruiting alanine- and threonine-charged tRNA to the A-site and directing the elongation of stalled nascent chains independently of mRNA or 40S subunits, leading to non-templated C-terminal Ala and Thr extensions (CAT tails). CAT tails promote the rkr1/ltn1-mediated ubiquitination of incompletely synthesized nascent polypeptides: CAT tailing facilitates rkr1/ltn1-dependent ubiquitination by exposing lysine residues that would otherwise remain buried in the ribosomal exit tunnel. Following ubiquitination, incompletely synthesized nascent polypeptides are recognized by CDC48 and degraded by the proteasome. CAT-tailed proteins tend to aggregate and sequester chaperones and can induce proteotoxic stress; their rkr1/ltn1-dependent ubiquitination and degradation is required to prevent proteotoxic stress. The protein is Ribosome quality control complex subunit 2 of Schizosaccharomyces pombe (strain 972 / ATCC 24843) (Fission yeast).